Reading from the N-terminus, the 489-residue chain is Probable serine protease EDA2 (489 aa).

An N-terminal signal peptide occupies residues 1 to 25; sequence MSLEFGFILINIFTAIVSFSTLSHA. Residues Asn-35, Asn-51, and Asn-162 are each glycosylated (N-linked (GlcNAc...) asparagine). The Charge relay system role is filled by Ser-178. N-linked (GlcNAc...) asparagine glycans are attached at residues Asn-253, Asn-293, Asn-365, and Asn-406. Asp-410 functions as the Charge relay system in the catalytic mechanism. N-linked (GlcNAc...) asparagine glycosylation occurs at Asn-419. His-436 serves as the catalytic Charge relay system. Asn-456 carries N-linked (GlcNAc...) asparagine glycosylation.

This sequence belongs to the peptidase S28 family.

It is found in the secreted. Its function is as follows. May be involved in a proteolytic pathway controlling the nuclear division phase of megagametogenesis. The sequence is that of Probable serine protease EDA2 (EDA2) from Arabidopsis thaliana (Mouse-ear cress).